The following is a 955-amino-acid chain: E3 ubiquitin-protein ligase MIB2 (955 aa).

An N-acetylmethionine modification is found at methionine 1. The 80-residue stretch at 1-80 folds into the MIB/HERC2 1 domain; sequence MDPDPQAGVQ…AHDLLLYDNA (80 aa). The segment at 86–138 adopts a ZZ-type zinc-finger fold; sequence HPNIICDCCKKHGLRGMRWKCRVCLDYDLCTQCYMHNKHELAHAFDRYETAHS. Residues cysteine 91, cysteine 94, cysteine 106, cysteine 109, cysteine 115, cysteine 118, histidine 124, and histidine 128 each contribute to the Zn(2+) site. Residues 149–227 enclose the MIB/HERC2 2 domain; sequence LPRIPLRGIF…KVDLKCVGEA (79 aa). Serine 251 carries the phosphoserine modification. ANK repeat units follow at residues 464 to 493, 497 to 526, 530 to 559, 563 to 595, 599 to 628, 633 to 663, 667 to 696, 700 to 728, and 769 to 798; these read QGRT…GVDL, EGNT…RADA, TQST…DVNL, HSDT…DVTA, QGFT…QLVD, DGFT…DVNV, KLQS…SVNA, EGDT…DPGP, and RGRS…ERQA. RING-type zinc fingers lie at residues 832–867 and 911–944; these read CLVC…IRCQ and CPIC…PICR.

Interacts with actin monomer. In terms of processing, ubiquitinated. Possibly via autoubiquitination. In terms of tissue distribution, expressed in skeletal muscle, and to a lesser extent in heart, brain and kidney.

Its subcellular location is the cytoplasm. It is found in the endosome. It carries out the reaction S-ubiquitinyl-[E2 ubiquitin-conjugating enzyme]-L-cysteine + [acceptor protein]-L-lysine = [E2 ubiquitin-conjugating enzyme]-L-cysteine + N(6)-ubiquitinyl-[acceptor protein]-L-lysine.. The protein operates within protein modification; protein ubiquitination. In terms of biological role, E3 ubiquitin-protein ligase that mediates ubiquitination of Delta receptors, which act as ligands of Notch proteins. Positively regulates the Delta-mediated Notch signaling by ubiquitinating the intracellular domain of Delta, leading to endocytosis of Delta receptors. In Homo sapiens (Human), this protein is E3 ubiquitin-protein ligase MIB2.